We begin with the raw amino-acid sequence, 417 residues long: 2-oxoglutarate and iron-dependent oxygenase JMJD4 (417 aa).

A JmjC domain is found at 142 to 301 (CRDFPVEDVF…NMWRFLQQEL (160 aa)). Histidine 189, aspartate 191, and histidine 269 together coordinate Fe cation.

It belongs to the JMJD6 family. As to quaternary structure, interacts with ETF1. Interacts with the ETF1-GSPT1 complex. Fe(2+) serves as cofactor.

Its subcellular location is the cytoplasm. It catalyses the reaction L-lysyl-[protein] + 2-oxoglutarate + O2 = 4-hydroxy-L-lysyl-[protein] + succinate + CO2. In terms of biological role, catalyzes the 2-oxoglutarate and iron-dependent C4-lysyl hydroxylation of ETF1 at 'Lys-63' thereby promoting the translational termination efficiency of ETF1. This chain is 2-oxoglutarate and iron-dependent oxygenase JMJD4 (JMJD4), found in Homo sapiens (Human).